The following is a 324-amino-acid chain: Acetyl-coenzyme A carboxylase carboxyl transferase subunit alpha (324 aa).

Positions 37–291 (KLDKRLDRLK…QEYVLQEWVK (255 aa)) constitute a CoA carboxyltransferase C-terminal domain.

It belongs to the AccA family. Acetyl-CoA carboxylase is a heterohexamer composed of biotin carboxyl carrier protein (AccB), biotin carboxylase (AccC) and two subunits each of ACCase subunit alpha (AccA) and ACCase subunit beta (AccD).

It is found in the cytoplasm. The enzyme catalyses N(6)-carboxybiotinyl-L-lysyl-[protein] + acetyl-CoA = N(6)-biotinyl-L-lysyl-[protein] + malonyl-CoA. It participates in lipid metabolism; malonyl-CoA biosynthesis; malonyl-CoA from acetyl-CoA: step 1/1. Component of the acetyl coenzyme A carboxylase (ACC) complex. First, biotin carboxylase catalyzes the carboxylation of biotin on its carrier protein (BCCP) and then the CO(2) group is transferred by the carboxyltransferase to acetyl-CoA to form malonyl-CoA. This is Acetyl-coenzyme A carboxylase carboxyl transferase subunit alpha from Chlamydia trachomatis serovar L2 (strain ATCC VR-902B / DSM 19102 / 434/Bu).